The chain runs to 439 residues: MGHSAVLLSVALVILPACVTGGPVQRQQQHKLLLVSFDGFRWNYDQDVETPNLDSMAQEGVKARYMTPAFVTMTSPCHFTLVTGKYIENHGVVHNMFYNTTNKVRLPYHATLGIQRWWDNGSIPIWITAQRQGLKTGSFFYPGGNVTYQGEAVTMSRKEGVLHNYKNETEWRANVDTVMKWFTEEDVSLVTLYFGEPDSTGHKYGPESQERKDMVKQVDRTVGYLRDSIKRHHLTDSLNLIITSDHGMTTVNKKASDLVEFHKFPNFTFRDIEFELLDYGPNGMLIPKEGMLEKVYSVLKDAHPRLHVYKKEDFPKTFHYANNPRITSLLMYSDLGYVIHGRVNVQFNSGEHGFDNQDMDMKTIFRAVGPSFKAGLEVEPFESVHVYELMCQLLGIVPEPNDGHPGVLQPMLRSGSPLSRQHHLVVVLMGILTGLAKVV.

An N-terminal signal peptide occupies residues 1–21 (MGHSAVLLSVALVILPACVTG). Over 22 to 422 (GPVQRQQQHK…RSGSPLSRQH (401 aa)) the chain is Extracellular. 2 residues coordinate Zn(2+): D38 and T74. The tract at residues 71 to 77 (VTMTSPC) is required for enzyme activity. T74 functions as the Nucleophile in the catalytic mechanism. A substrate-binding site is contributed by N95. N-linked (GlcNAc...) asparagine glycosylation is found at N99, N120, N145, and N167. The Zn(2+) site is built by D198, H202, D245, and H246. The N-linked (GlcNAc...) asparagine glycan is linked to N266. H352 lines the Zn(2+) pocket. A helical membrane pass occupies residues 423–439 (HLVVVLMGILTGLAKVV).

This sequence belongs to the nucleotide pyrophosphatase/phosphodiesterase family. Zn(2+) serves as cofactor. Post-translationally, N-glycosylated; required for activity and transport to the plasma membrane. As to expression, detected in small intestine (at protein level). Highly expressed in the jejunum.

The protein localises to the cell membrane. It catalyses the reaction a sphingomyelin + H2O = phosphocholine + an N-acylsphing-4-enine + H(+). The catalysed reaction is a 1-O-alkyl-2-acetyl-sn-glycero-3-phosphocholine + H2O = a 1-O-alkyl-2-acetyl-sn-glycerol + phosphocholine + H(+). The enzyme catalyses 1-O-octadecyl-2-acetyl-sn-glycero-3-phosphocholine + H2O = 1-O-octadecyl-2-acetyl-sn-glycerol + phosphocholine + H(+). It carries out the reaction 1-hexadecanoyl-sn-glycero-3-phosphocholine + H2O = 1-hexadecanoyl-sn-glycerol + phosphocholine + H(+). Its activity is regulated as follows. platelet-activating factor hydrolysis is inhibited by higher amount of sphingomyelin. The hydrolysis of platelet-activating factor and sphingomyelin can be inhibited by the presence of sphingomyelin and platelet-activating factor respectively, the inhibition of platelet-activating factor hydrolysis by sphingomyelin being stronger. PAF hydrolysis is dose-dependently increased by both taurocholate (TC) and taurodeoxycholate (TDC). Hydrolase activity against PAF is inhibited by EDTA and stimulated by 0.1-0.25 mM Zn2+. Its function is as follows. Choline-specific phosphodiesterase that hydrolyzes sphingomyelin (SM) releasing the ceramide and phosphocholine and therefore is involved in sphingomyelin digestion, ceramide formation, and fatty acid (FA) absorption in the gastrointestinal tract. Also has phospholipase C activity and can also cleave phosphocholine from palmitoyl lyso-phosphatidylcholine and platelet-activating factor (PAF) leading to its inactivation. Does not have nucleotide pyrophosphatase activity. May promote cholesterol absorption by affecting the levels of sphingomyelin derived from either diet or endogenous sources, in the intestinal lumen. This chain is Ectonucleotide pyrophosphatase/phosphodiesterase family member 7, found in Rattus norvegicus (Rat).